Here is a 314-residue protein sequence, read N- to C-terminus: Homoserine O-acetyltransferase (314 aa).

Cysteine 142 serves as the catalytic Acyl-thioester intermediate. The substrate site is built by lysine 163 and serine 192. Catalysis depends on histidine 235, which acts as the Proton acceptor. Residue glutamate 237 is part of the active site. Arginine 249 serves as a coordination point for substrate.

It belongs to the MetA family.

It localises to the cytoplasm. It catalyses the reaction L-homoserine + acetyl-CoA = O-acetyl-L-homoserine + CoA. It functions in the pathway amino-acid biosynthesis; L-methionine biosynthesis via de novo pathway; O-acetyl-L-homoserine from L-homoserine: step 1/1. Transfers an acetyl group from acetyl-CoA to L-homoserine, forming acetyl-L-homoserine. This chain is Homoserine O-acetyltransferase, found in Streptococcus pneumoniae serotype 19F (strain G54).